The primary structure comprises 388 residues: Putative nickel insertion protein (388 aa).

Belongs to the LarC family.

The polypeptide is Putative nickel insertion protein (Geobacter sulfurreducens (strain ATCC 51573 / DSM 12127 / PCA)).